Consider the following 429-residue polypeptide: Glutamate--tRNA ligase 1 (429 aa).

The 'HIGH' region motif lies at 6-16; sequence PSPTGDMHIGN. The 'KMSKS' region motif lies at 235–239; it reads KMSKR. Lys238 contributes to the ATP binding site.

Belongs to the class-I aminoacyl-tRNA synthetase family. Glutamate--tRNA ligase type 1 subfamily. As to quaternary structure, monomer.

Its subcellular location is the cytoplasm. It catalyses the reaction tRNA(Glu) + L-glutamate + ATP = L-glutamyl-tRNA(Glu) + AMP + diphosphate. In terms of biological role, catalyzes the attachment of glutamate to tRNA(Glu) in a two-step reaction: glutamate is first activated by ATP to form Glu-AMP and then transferred to the acceptor end of tRNA(Glu). This Campylobacter fetus subsp. fetus (strain 82-40) protein is Glutamate--tRNA ligase 1.